Consider the following 1485-residue polypeptide: MNEPPPKRQSVFAKGMKKLQRSKSLLNFAEQAKPPTPENFSSLDPKSNLNSIGLSLVGYGLSSDHLPPPRLDTDSESVSSRTSSPTLHVTTKFNPKQRVESFQTATNFKNQIPPEEIVDQLFEKLLSIRVFPDEAVYSLKKQPVERKWELLLREHETNHHFDLKKLSEQATDKFLTNRDRFQEHEFLIMSRSTTQEPKPKLKPLRIVSGGEDYDDEETPTVTKLVHDDSSTSKLSIESGGSSGAPTETESLLGLVNKKLKIRDGSPDWYVSRIMANKLSLKDCKKLERKLVENNVVKNSGVTWTQGFINAQGETALSVVLTKINKKSIKSNEEFDKEYLIVKCLKHINSEKRDETSSLKEKVYVVKALVFLLVSPRLTTRILVTEVLVMLMLLRDKTLWKSALDGLSSLQDRNGDYVIFQPWLNAFEETIIKYSWSQNKAGELSNLKNYATITLILINSMVDMCSSLKRRISIRRDFGNARILNIFEKLAQIEDTRIDNEIEKYEMYAEEDYNEYVEGKKKRNSKQLPNIPQSKLKLLQVSDFVTTPEANTSLEEDELTPELEDNLSGTESSFDEKSFMTKLKEAEDIESDGAMKSVLQRLMKLKQSERSTEDVHKMLVLVDSMLQHVTNESRVIGTDAHSVLNITIQKLMDRLSTEDMARRAVAESKMLSRQLELVKEEKELLEKELETNKIETIRELKKENYYQAELIATQERQLSKLQQKIEQLQSPNNTALPVVDVGQQGFGNGTVASLKDTSSSSPSKRPPTPPGLYSMQKGSLRGGISAPPMLDFKDARPVSDLQDSRPVSDLQDAPRLVESSAPPLPESKDPVAQPPPPESKDSVAPPPPPVPDFIKSAAPPPPPLPGFMNASAPPPPPVPEFIKSSAPPPPPLPGFITTTPPPPPPLPGFITTTPPPPPMPGMLQPGKVKELGTLFKEKHKQEPQKGITKTKADVVPSIRPKNKLKQMHWDKLENIEKTFWNNLEDSVLSNKLIEQGVLGEVEQVFAAKTATIKKKTAVESQQQPTKKSFLSRDLSQQFGINLHMFANLSEEKLVLKVLRCNSEILENHSVLEFFNNEALVELSDSLFRNLAPYSTDPRTRKKPMKNPEELERADRIFLELCYNLRHYWRSRSRALLFSQTYKKDYIDLMRKLNIVDEANAALKKSESLQNVLGIIRTVGNFMNDDAKQALGFKLDTLQRLKFMKDDQNSMTFLHYIEKIVRHSFPEYGSFVDDLNVLSTLHNISIEQLETDCEEMSRSVKNITDSLERGKLSNKKDLHPEDRILTTISSPMLNAKNKNAMLQSHLKRTAGELNSLMTFFGENPKDATARNTFFYKFVTFITEYKKAHVENIQREEEQRTYEIRKKILEDKIAKKEKLKEESAEPEAVVDTAEESSAVIDSLLEKLKSSTPITTNRAKTKNRRSKALSFYSENPLEIVADTKYESVNNLKRRMTTRKRTTDGETSPKSEQFMSRAQAMLHQLRNKEE.

Disordered stretches follow at residues 65-88, 226-248, and 549-575; these read HLPP…PTLH, HDDS…PTET, and ANTS…SFDE. The GBD/FH3 domain maps to 110–636; the sequence is NQIPPEEIVD…HVTNESRVIG (527 aa). Polar residues predominate over residues 231–248; that stretch reads TSKLSIESGGSSGAPTET. Over residues 553–564 the composition is skewed to acidic residues; that stretch reads LEEDELTPELED. Residues 660–734 adopt a coiled-coil conformation; it reads ARRAVAESKM…EQLQSPNNTA (75 aa). The interval 746–874 is disordered; sequence GNGTVASLKD…GFMNASAPPP (129 aa). In terms of domain architecture, FH2 spans 953 to 1368; sequence VVPSIRPKNK…YEIRKKILED (416 aa). Coiled coils occupy residues 1240-1312 and 1351-1382; these read HNIS…GELN and QREE…ESAE. The tract at residues 1447-1471 is disordered; it reads LKRRMTTRKRTTDGETSPKSEQFMS.

Belongs to the formin homology family. BNI1 subfamily. Interacts with IQG1.

Its subcellular location is the bud neck. The protein resides in the cell septum. In terms of biological role, may organize microtubules by mediating spindle positioning and movement in the budding process. Required for cytokinesis and the maintenance of polarized hyphal growth. The sequence is that of Formin BNR1 (BNR1) from Candida albicans (strain SC5314 / ATCC MYA-2876) (Yeast).